Reading from the N-terminus, the 608-residue chain is Sensor protein kinase WalK (608 aa).

A run of 2 helical transmembrane segments spans residues 14-34 (LVIVYVLLIIIGMQIIGLYFT) and 183-203 (IFIVGTAISLLITVILGFFIA). An HAMP domain is found at 204-256 (RTITKPITDMRNQTVEMSRGNYTQRVKIYGNDEIGELALAFNNLSKRVQEAQA). Positions 261 to 331 (EKRRLDSVIT…EIQENNDSFL (71 aa)) constitute a PAS domain. H271, D274, H364, and E368 together coordinate Zn(2+). Positions 314–378 (LEDEFKLEEI…QQQVERERRE (65 aa)) constitute a PAC domain. A Histidine kinase domain is found at 382 to 600 (NVSHELRTPL…SIFITLPCEV (219 aa)). Phosphohistidine; by autocatalysis is present on H385.

As to quaternary structure, forms homodimers. Forms homooligomers. Post-translationally, autophosphorylated.

It localises to the cell membrane. The catalysed reaction is ATP + protein L-histidine = ADP + protein N-phospho-L-histidine.. By zinc. Zinc-binding negatively regulates WalK kinase activity and thus autophosphorylation. Its function is as follows. Member of the two-component regulatory system WalK/WalR that regulates genes involved in cell wall metabolism, virulence regulation, biofilm production, oxidative stress resistance and antibiotic resistance via direct or indirect regulation of autolysins. Functions as a sensor protein kinase which is autophosphorylated at a histidine residue in the dimerization domain and transfers its phosphate group to the conserved aspartic acid residue in the regulatory domain of WalR. In turn, WalR binds to the upstream promoter regions of the target genes to positively and negatively regulate their expression. In Staphylococcus aureus (strain MRSA252), this protein is Sensor protein kinase WalK (walK).